The sequence spans 256 residues: Small ribosomal subunit protein eS1 (256 aa).

Position 2 is an N-acetylalanine; partial (alanine 2).

This sequence belongs to the eukaryotic ribosomal protein eS1 family. In terms of assembly, component of the small ribosomal subunit. Mature ribosomes consist of a small (40S) and a large (60S) subunit. The 40S subunit contains about 33 different proteins and 1 molecule of RNA (18S). The 60S subunit contains about 49 different proteins and 3 molecules of RNA (25S, 5.8S and 5S).

Its subcellular location is the cytoplasm. This is Small ribosomal subunit protein eS1 (rps1) from Sclerotinia sclerotiorum (strain ATCC 18683 / 1980 / Ss-1) (White mold).